The following is a 174-amino-acid chain: Chorion protein S18 (174 aa).

Residues 1-17 (MMKFMCIFICAVAAVSA) form the signal peptide. Low complexity predominate over residues 154–165 (AAAASSSVAGVA). The interval 154–174 (AAAASSSVAGVAKKGYRKSSY) is disordered.

It belongs to the chorion protein S15/S18 family.

The protein localises to the secreted. Functionally, chorion membrane (egg shell) protein; plays a role in protecting the egg from the environment. In Drosophila subobscura (Fruit fly), this protein is Chorion protein S18 (Cp18).